The sequence spans 858 residues: Leucine--tRNA ligase (858 aa).

The 'HIGH' region motif lies at 42–52; sequence PYPSGRLHMGH. The 'KMSKS' region signature appears at 618–622; that stretch reads KMSKS. Residue K621 participates in ATP binding.

The protein belongs to the class-I aminoacyl-tRNA synthetase family.

It localises to the cytoplasm. It carries out the reaction tRNA(Leu) + L-leucine + ATP = L-leucyl-tRNA(Leu) + AMP + diphosphate. This is Leucine--tRNA ligase from Aeromonas salmonicida (strain A449).